A 48-amino-acid polypeptide reads, in one-letter code: Delta-ctenitoxin-Pn1b (48 aa).

Intrachain disulfides connect Cys1-Cys15, Cys8-Cys21, Cys12-Cys48, Cys14-Cys31, and Cys23-Cys29.

Belongs to the neurotoxin 03 (Tx2) family. 05 subfamily. In terms of tissue distribution, expressed by the venom gland.

The protein resides in the secreted. Insecticidal neurotoxin that reversibly inhibits the N-methyl-D-aspartate (NMDA)-subtype of ionotropic glutamate receptor (GRIN) and inhibits inactivation of insect sodium channels (Nav). Inhibits glutamate uptake in rat brain synaptosomes. In vivo, induces immediate excitatory effects when injected intrathoracically in houseflies and cockroaches. This chain is Delta-ctenitoxin-Pn1b, found in Phoneutria nigriventer (Brazilian armed spider).